We begin with the raw amino-acid sequence, 199 residues long: Elongation factor Ts (199 aa).

Residues 80–83 (TDFV) form an involved in Mg(2+) ion dislocation from EF-Tu region.

This sequence belongs to the EF-Ts family.

The protein localises to the cytoplasm. In terms of biological role, associates with the EF-Tu.GDP complex and induces the exchange of GDP to GTP. It remains bound to the aminoacyl-tRNA.EF-Tu.GTP complex up to the GTP hydrolysis stage on the ribosome. The protein is Elongation factor Ts of Thermodesulfovibrio yellowstonii (strain ATCC 51303 / DSM 11347 / YP87).